Reading from the N-terminus, the 356-residue chain is Glutamine synthetase cytosolic isozyme (356 aa).

The region spanning 19–99 (IIAEYIWIGG…VMCDAYTPAG (81 aa)) is the GS beta-grasp domain. The disordered stretch occupies residues 38–66 (RTLPGPVTDPSQLPKWNYDGSSTGQAPGE). The GS catalytic domain occupies 106–356 (KRHAAAKIFS…IADTTILWKP (251 aa)).

Belongs to the glutamine synthetase family. In terms of assembly, homooctamer.

The protein localises to the cytoplasm. The enzyme catalyses L-glutamate + NH4(+) + ATP = L-glutamine + ADP + phosphate + H(+). The sequence is that of Glutamine synthetase cytosolic isozyme from Medicago sativa (Alfalfa).